Here is a 179-residue protein sequence, read N- to C-terminus: NADH-quinone oxidoreductase subunit B (179 aa).

The [4Fe-4S] cluster site is built by Cys52, Cys53, Cys117, and Cys147.

The protein belongs to the complex I 20 kDa subunit family. In terms of assembly, NDH-1 is composed of 14 different subunits. Subunits NuoB, C, D, E, F, and G constitute the peripheral sector of the complex. [4Fe-4S] cluster is required as a cofactor.

The protein localises to the cell inner membrane. It carries out the reaction a quinone + NADH + 5 H(+)(in) = a quinol + NAD(+) + 4 H(+)(out). Functionally, NDH-1 shuttles electrons from NADH, via FMN and iron-sulfur (Fe-S) centers, to quinones in the respiratory chain. The immediate electron acceptor for the enzyme in this species is believed to be ubiquinone. Couples the redox reaction to proton translocation (for every two electrons transferred, four hydrogen ions are translocated across the cytoplasmic membrane), and thus conserves the redox energy in a proton gradient. The chain is NADH-quinone oxidoreductase subunit B from Ehrlichia chaffeensis (strain ATCC CRL-10679 / Arkansas).